We begin with the raw amino-acid sequence, 264 residues long: Putative [LysW]-aminoadipate/[LysW]-glutamate kinase (264 aa).

Substrate contacts are provided by residues 34-35 (GG), Arg-61, and Asn-169.

This sequence belongs to the acetylglutamate kinase family. LysZ subfamily.

It localises to the cytoplasm. The catalysed reaction is [amino-group carrier protein]-C-terminal-N-(1,4-dicarboxybutan-1-yl)-L-glutamine + ATP = [amino-group carrier protein]-C-terminal-N-(1-carboxy-5-phosphooxy-5-oxopentan-1-yl)-L-glutamine + ADP. It catalyses the reaction [amino-group carrier protein]-C-terminal-gamma-(L-glutamyl)-L-glutamate + ATP = [amino-group carrier protein]-C-terminal-gamma-(5-phospho-L-glutamyl)-L-glutamate + ADP. The protein operates within amino-acid biosynthesis; L-lysine biosynthesis via AAA pathway; L-lysine from L-alpha-aminoadipate (Thermus route): step 2/5. Its pathway is amino-acid biosynthesis; L-arginine biosynthesis. In terms of biological role, involved in both the arginine and lysine biosynthetic pathways. Phosphorylates the LysW-bound precursors glutamate (for arginine biosynthesis), respectively alpha-aminoadipate (for lysine biosynthesis). This Ignicoccus hospitalis (strain KIN4/I / DSM 18386 / JCM 14125) protein is Putative [LysW]-aminoadipate/[LysW]-glutamate kinase.